A 124-amino-acid chain; its full sequence is Large ribosomal subunit protein bL21 (124 aa).

A disordered region spans residues 105–124; it reads NAPSIGPRVRKAKPAAEAAE.

It belongs to the bacterial ribosomal protein bL21 family. As to quaternary structure, part of the 50S ribosomal subunit. Contacts protein L20.

In terms of biological role, this protein binds to 23S rRNA in the presence of protein L20. The protein is Large ribosomal subunit protein bL21 of Rhodopseudomonas palustris (strain BisA53).